The primary structure comprises 193 residues: Undecaprenyl-diphosphatase BcrC (193 aa).

4 helical membrane passes run 24–44 (VFIT…IWLF), 53–73 (VLYA…ITLV), 119–139 (IGWP…WVGH), and 140–160 (HYPV…FLFF).

The protein belongs to the BcrC/YbjG family.

Its subcellular location is the cell membrane. The enzyme catalyses di-trans,octa-cis-undecaprenyl diphosphate + H2O = di-trans,octa-cis-undecaprenyl phosphate + phosphate + H(+). Its function is as follows. Catalyzes the dephosphorylation of undecaprenyl diphosphate (UPP). Confers resistance to bacitracin. This chain is Undecaprenyl-diphosphatase BcrC (bcrC), found in Bacillus subtilis (strain 168).